We begin with the raw amino-acid sequence, 714 residues long: Lipase maturation factor 2 (714 aa).

9 helical membrane-spanning segments follow: residues L11 to I31, M79 to L99, L103 to F125, S159 to V179, F221 to I241, I257 to F277, T304 to W324, V358 to L378, and A398 to I418. An N-linked (GlcNAc...) asparagine glycan is attached at N483. The helical transmembrane segment at P629–L649 threads the bilayer. The span at R654–K669 shows a compositional bias: basic residues. Residues R654 to K714 are disordered. Residues R683–R708 are compositionally biased toward basic and acidic residues.

The protein belongs to the lipase maturation factor family.

It is found in the endoplasmic reticulum membrane. In terms of biological role, involved in the maturation of specific proteins in the endoplasmic reticulum. May be required for maturation and transport of active lipoprotein lipase (LPL) through the secretory pathway. The protein is Lipase maturation factor 2 (LMF2) of Gallus gallus (Chicken).